The chain runs to 64 residues: uncharacterized protein (64 aa).

Its subcellular location is the mitochondrion. This is an uncharacterized protein from Marchantia polymorpha (Common liverwort).